Here is a 283-residue protein sequence, read N- to C-terminus: Pantothenate synthetase (283 aa).

Met26–His33 is a binding site for ATP. His33 acts as the Proton donor in catalysis. Position 57 (Gln57) interacts with (R)-pantoate. Gln57 provides a ligand contact to beta-alanine. Position 144–147 (Gly144–Asp147) interacts with ATP. Residue Gln150 participates in (R)-pantoate binding. ATP is bound by residues Ile173 and Leu181–Arg184.

It belongs to the pantothenate synthetase family. Homodimer.

The protein localises to the cytoplasm. It carries out the reaction (R)-pantoate + beta-alanine + ATP = (R)-pantothenate + AMP + diphosphate + H(+). It functions in the pathway cofactor biosynthesis; (R)-pantothenate biosynthesis; (R)-pantothenate from (R)-pantoate and beta-alanine: step 1/1. In terms of biological role, catalyzes the condensation of pantoate with beta-alanine in an ATP-dependent reaction via a pantoyl-adenylate intermediate. This Polynucleobacter necessarius subsp. necessarius (strain STIR1) protein is Pantothenate synthetase.